Reading from the N-terminus, the 438-residue chain is Na(+)/H(+) antiporter NhaA (438 aa).

11 helical membrane passes run 23 to 43, 62 to 82, 104 to 124, 133 to 153, 162 to 182, 185 to 205, 221 to 241, 302 to 322, 337 to 357, 372 to 392, and 410 to 430; these read FGGIFLFLNAVLAMVVANSFL, FFIGFSLHNWIDDVLMALFFL, SFPVIAAIGGMIAPGLIYFFL, GFGIPMATDIAFALGVIMLLG, VFLITLAVADDLGAIVVIALF, TNLKFAWLLGALGVVLVLAVL, VLLWFCVHQSGIHATIAAVIL, FLAPISGYFIMPLFAFANAGV, LGVILGLCLGKPLGIFLITFI, WWHILGAGLLAGIGFTMSMFI, and IAILLGSLISGIIGALYLFAL.

The protein belongs to the NhaA Na(+)/H(+) (TC 2.A.33) antiporter family.

Its subcellular location is the cell inner membrane. The catalysed reaction is Na(+)(in) + 2 H(+)(out) = Na(+)(out) + 2 H(+)(in). Its function is as follows. Na(+)/H(+) antiporter that extrudes sodium in exchange for external protons. The polypeptide is Na(+)/H(+) antiporter NhaA (Helicobacter pylori (strain ATCC 700392 / 26695) (Campylobacter pylori)).